The sequence spans 184 residues: Large ribosomal subunit protein uL6 (184 aa).

This sequence belongs to the universal ribosomal protein uL6 family. Part of the 50S ribosomal subunit.

This protein binds to the 23S rRNA, and is important in its secondary structure. It is located near the subunit interface in the base of the L7/L12 stalk, and near the tRNA binding site of the peptidyltransferase center. The sequence is that of Large ribosomal subunit protein uL6 from Thermococcus gammatolerans (strain DSM 15229 / JCM 11827 / EJ3).